The chain runs to 574 residues: Squalene monooxygenase (574 aa).

Residues 1–20 (MWTFLGIATFTYFYKKFGDF) lie on the Cytoplasmic side of the membrane. The tract at residues 1 to 100 (MWTFLGIATF…EQLEARRRRK (100 aa)) is interaction with MARCHF6. An intramembrane segment occupies 21-41 (ITLANREVLLCVLVFLSLGLV). Topologically, residues 42–574 (LSYRCRHRNG…IYSEMKYMVH (533 aa)) are cytoplasmic. Residues 62–73 (QFALFSDILSGL) are required for degradation in response to high membrane cholesterol levels. The sufficient for enzyme activity stretch occupies residues 118 to 574 (TSSQNDPEVI…IYSEMKYMVH (457 aa)). Residues 133 to 134 (VL), 153 to 154 (ER), Arg-161, Phe-166, Arg-234, Val-250, Asp-408, and Met-421 each bind FAD. Residues 516–574 (PLVLIGHFFAVAIYAVYFCFKSEPWITKPRALLSSGAVLYKACSVIFPLIYSEMKYMVH) are hydrophobic; mediates interaction with membranes.

This sequence belongs to the squalene monooxygenase family. As to quaternary structure, interacts (via N-terminal domain) with MARCHF6. Interacts with SMIM22; this interaction modulates lipid droplet formation. FAD is required as a cofactor. Ubiquitinated by MARCHF6 in response to high cholesterol levels in intracellular membranes, leading to proteasomal degradation. In terms of tissue distribution, detected in liver (at protein level).

It is found in the microsome membrane. The protein resides in the endoplasmic reticulum membrane. It carries out the reaction squalene + reduced [NADPH--hemoprotein reductase] + O2 = (S)-2,3-epoxysqualene + oxidized [NADPH--hemoprotein reductase] + H2O + H(+). Its pathway is terpene metabolism; lanosterol biosynthesis; lanosterol from farnesyl diphosphate: step 2/3. With respect to regulation, inhibited by NB-598 ((E)N-ethyl-N-(6,6-dimethyl-2-hepten-4-ynyl)-3-[(3,3'-bi-thiophen-5-yl)methoxy]benzene-methanamine). Contrary to fungal enzymes, the mammalian enzyme is only slightly inhibited by terbinafine. Inhibited by tellurite, tellurium dioxide, selenite, and selenium dioxide. Catalyzes the stereospecific oxidation of squalene to (S)-2,3-epoxysqualene, and is considered to be a rate-limiting enzyme in steroid biosynthesis. The chain is Squalene monooxygenase (SQLE) from Homo sapiens (Human).